Reading from the N-terminus, the 159-residue chain is Neurotrophin-3 (159 aa).

Residues 1–3 (IQS) form the signal peptide. The propeptide occupies 4-115 (TSMDQGILTE…VQNRTSRRKR (112 aa)). A disordered region spans residues 91 to 129 (APLEPPPLYLTEEPLVQNRTSRRKREGKRHRGEYSVCDS). N-linked (GlcNAc...) asparagine glycosylation occurs at Asn108. Basic residues predominate over residues 110–121 (TSRRKREGKRHR).

This sequence belongs to the NGF-beta family.

It localises to the secreted. Functionally, seems to promote the survival of visceral and proprioceptive sensory neurons. The protein is Neurotrophin-3 (NTF3) of Candoia carinata (Papuan tree boa).